Reading from the N-terminus, the 85-residue chain is Large ribosomal subunit protein bL31B (85 aa).

Belongs to the bacterial ribosomal protein bL31 family. Type B subfamily. In terms of assembly, part of the 50S ribosomal subunit.

The chain is Large ribosomal subunit protein bL31B from Staphylococcus saprophyticus subsp. saprophyticus (strain ATCC 15305 / DSM 20229 / NCIMB 8711 / NCTC 7292 / S-41).